A 473-amino-acid chain; its full sequence is Lactate utilization protein B (473 aa).

2 4Fe-4S ferredoxin-type domains span residues 302–332 (GSEF…GHSY) and 351–380 (YDDY…LHDL). [4Fe-4S] cluster-binding residues include C311, C314, C317, C321, C364, C367, and C371.

Belongs to the LutB/YkgF family.

Is involved in L-lactate degradation and allows cells to grow with lactate as the sole carbon source. Has probably a role as an electron transporter during oxidation of L-lactate. The protein is Lactate utilization protein B of Bacillus cytotoxicus (strain DSM 22905 / CIP 110041 / 391-98 / NVH 391-98).